A 124-amino-acid chain; its full sequence is MADCYTELEKAVVVLVENFYKYVSKHSLVKNKISKSSFRKMLQRELNHMLTDTGNRKAADKLIQNLDANHDGRICFDEYWTMIGGITSPMANLIRQQECQQESQQECQQESQQESQQESQQGSS.

Residues 23-37 (VSKHSLVKNKISKSS) form the EF-hand 1; degenerate domain. An EF-hand 2 domain is found at 54-89 (GNRKAADKLIQNLDANHDGRICFDEYWTMIGGITSP). Residues Asp-67, Asn-69, Asp-71, Arg-73, and Glu-78 each contribute to the Ca(2+) site. The tract at residues 97 to 124 (QECQQESQQECQQESQQESQQESQQGSS) is disordered.

The protein belongs to the S-100 family. As to quaternary structure, homodimer. Interacts with TP53. As to expression, ubiquitous. Widely distributed throughout the adult brain and predominantly expressed within specific astrocyte populations. Expressed at high level in adipose tissues of obese animals.

It is found in the nucleus. The protein localises to the nucleolus. The protein resides in the cytoplasm. Functionally, calcium-binding protein. Binds one calcium ion per monomer. Can promote differentiation of adipocytes (in vitro). Overexpression in 3T3-L1 preadipocytes increases their proliferation, enhances adipogenesis and reduces insulin-stimulated glucose uptake. The protein is Protein S100-A16 of Mus musculus (Mouse).